A 539-amino-acid polypeptide reads, in one-letter code: Acid-sensing ion channel 4 (539 aa).

At 1–68 the chain is on the cytoplasmic side; it reads MPIEIVCKIK…GPGPHGLRRT (68 aa). The helical transmembrane segment at 69 to 89 threads the bilayer; that stretch reads LWALALLTSLAAFLYQAASLA. The Extracellular segment spans residues 90-438; sequence RGYLTRPHLV…EQQAAYGLSA (349 aa). Intrachain disulfides connect Cys-118/Cys-202 and Cys-180/Cys-187. Asn-191, Asn-243, Asn-341, and Asn-376 each carry an N-linked (GlcNAc...) asparagine glycan. 5 disulfides stabilise this stretch: Cys-296–Cys-375, Cys-318–Cys-371, Cys-322–Cys-369, Cys-331–Cys-353, and Cys-333–Cys-345. Residues 439–459 form a helical membrane-spanning segment; that stretch reads LLGDLGGQMGLFIGASILTLL. The GAS motif; ion selectivity filter motif lies at 452-454; the sequence is GAS. Over 460-539 the chain is Cytoplasmic; the sequence is EILDYIYEVS…PGSLFEDFAC (80 aa). A disordered region spans residues 500-531; that stretch reads KEQSPCPSRGRAEGGGASSLLPNHHHPHGPPG.

The protein belongs to the amiloride-sensitive sodium channel (TC 1.A.6) family. ASIC4 subfamily. In terms of assembly, homotrimer. Heterotrimer; with other ASIC proteins producing functional channels.

The protein localises to the cell membrane. In terms of biological role, does not exhibit measurable stand-alone pH-gated sodium channel activity but may form pH-gated heterotrimeric sodium channels. Its activity could also depend on alternative gating mechanisms. The polypeptide is Acid-sensing ion channel 4 (Mus musculus (Mouse)).